We begin with the raw amino-acid sequence, 481 residues long: Beta-1,3-glucan-binding protein (481 aa).

Residues 1–18 form the signal peptide; sequence RCARVCAVLFLFIQISYG. Residues 20–120 enclose the CBM39 domain; sequence YQVPQVTVQA…LSFTVSALED (101 aa). The N-linked (GlcNAc...) asparagine glycan is linked to Asn-110. Residues 124 to 481 form the GH16 domain; sequence TGTGTDPVPT…LVDYVKVVAL (358 aa).

The protein belongs to the insect beta-1,3-glucan binding protein family.

It is found in the secreted. In terms of biological role, involved in the recognition of invading microorganisms. Binds specifically to beta-1,3-glucan and activates the phenoloxidase cascade. The protein is Beta-1,3-glucan-binding protein of Hyphantria cunea (Fall webworm moth).